The chain runs to 198 residues: Imidazoleglycerol-phosphate dehydratase (198 aa).

This sequence belongs to the imidazoleglycerol-phosphate dehydratase family.

Its subcellular location is the cytoplasm. The catalysed reaction is D-erythro-1-(imidazol-4-yl)glycerol 3-phosphate = 3-(imidazol-4-yl)-2-oxopropyl phosphate + H2O. Its pathway is amino-acid biosynthesis; L-histidine biosynthesis; L-histidine from 5-phospho-alpha-D-ribose 1-diphosphate: step 6/9. The chain is Imidazoleglycerol-phosphate dehydratase from Janthinobacterium sp. (strain Marseille) (Minibacterium massiliensis).